A 242-amino-acid polypeptide reads, in one-letter code: GDSL esterase/lipase At5g62930 (242 aa).

The active-site Nucleophile is serine 11. Residues 223-242 (PHHSHIDGKNPSKAFEERCL) form a disordered region.

Belongs to the 'GDSL' lipolytic enzyme family.

This is GDSL esterase/lipase At5g62930 from Arabidopsis thaliana (Mouse-ear cress).